We begin with the raw amino-acid sequence, 474 residues long: Flotillin-like protein 3 (474 aa).

C35 is lipidated: S-palmitoyl cysteine. Coiled coils occupy residues 235-255 (ENQREAEVAEANSELAKKKAA) and 305-325 (QYETKVQEANWELYKKQKEAE).

Belongs to the band 7/mec-2 family. Flotillin subfamily. May be palmitoylated. Expressed in all plant organs. Primarily expressed in vascular tissues. No change in spatial expression in root upon inoculation. Expression limited to the nodule vascular tissue.

It is found in the cell membrane. It localises to the membrane. The protein localises to the caveola. Its function is as follows. May act as a scaffolding protein within caveolar membranes, functionally participating in formation of caveolae or caveolae-like vesicles. May be involved in nodule formation. The chain is Flotillin-like protein 3 (FLOT3) from Medicago truncatula (Barrel medic).